A 570-amino-acid chain; its full sequence is MTEPIISFKDFSFQYHSQATPTLQNINVDIYPGEKVLVVGASGSGKSTFANCINGLIPFKTKGNITGELYINNQDATVSCLHDRSNVVGTVLQDTDGQFIGLTAAEDMAFLLENNCVEQDDMKKNVSYWAEKVGMIEHLNHRPQDLSGGQKQRVSLGGILIHRTPILILDEPLANLDPATGHETLRLLNNIHEETKSTMIIVEHRLEESLDDTFDRVLLFKDGKIIANTTPSDLLKSSKLKEAGIREPLYCTALKYAEVDVESIDNLANLRDVCMSEHVKFKVKKWIDETSANNDNKYKSEPLLELNEVCVQYSDYSNSVLNNVQLNVYRREMLSIVGHNGAGKSTLAKAICGFLDITGNIQFCNRGFNQLSISERSEFVGYVMQNPNHMISEKMIYDEVALGLRARGMKESDIKIRVENVLKICGLYAFRNWPIAALSYGQKKRVTIASVLVLNPEIIILDEPTAGQDFYHYNEIMSFLIELNRQGKTIIMITHDMHLLSEYSSRTVVLSKGQVVADTTPVLVLNDKKICEIASLRQTSLFEMAEYIGISEPQKLVQLFINHDRKVRRQ.

2 ABC transporter domains span residues 6-247 (ISFK…GIRE) and 304-537 (LELN…ASLR). Residues 40-47 (GASGSGKS) and 338-345 (GHNGAGKS) contribute to the ATP site.

Belongs to the ABC transporter superfamily.

The protein resides in the cell membrane. Probably part of an ABC transporter complex. Responsible for energy coupling to the transport system. This is Putative ABC transporter ATP-binding protein SACOL2708 from Staphylococcus aureus (strain COL).